The chain runs to 127 residues: Holo-[acyl-carrier-protein] synthase (127 aa).

Positions 9 and 58 each coordinate Mg(2+).

The protein belongs to the P-Pant transferase superfamily. AcpS family. Mg(2+) serves as cofactor.

It is found in the cytoplasm. It catalyses the reaction apo-[ACP] + CoA = holo-[ACP] + adenosine 3',5'-bisphosphate + H(+). Functionally, transfers the 4'-phosphopantetheine moiety from coenzyme A to a Ser of acyl-carrier-protein. This Shewanella putrefaciens (strain CN-32 / ATCC BAA-453) protein is Holo-[acyl-carrier-protein] synthase.